Consider the following 189-residue polypeptide: Glycerol-3-phosphate acyltransferase (189 aa).

5 helical membrane-spanning segments follow: residues 1–21, 50–70, 77–97, 111–131, and 151–171; these read MFWL…AIVL, KLAI…VLLA, LHAQ…PLYF, MLMG…LLTF, and LLAW…VMIV.

It belongs to the PlsY family. Probably interacts with PlsX.

The protein localises to the cell inner membrane. It carries out the reaction an acyl phosphate + sn-glycerol 3-phosphate = a 1-acyl-sn-glycero-3-phosphate + phosphate. It participates in lipid metabolism; phospholipid metabolism. Its function is as follows. Catalyzes the transfer of an acyl group from acyl-phosphate (acyl-PO(4)) to glycerol-3-phosphate (G3P) to form lysophosphatidic acid (LPA). This enzyme utilizes acyl-phosphate as fatty acyl donor, but not acyl-CoA or acyl-ACP. The polypeptide is Glycerol-3-phosphate acyltransferase (Pseudomonas putida (strain ATCC 700007 / DSM 6899 / JCM 31910 / BCRC 17059 / LMG 24140 / F1)).